Here is a 1740-residue protein sequence, read N- to C-terminus: SH3 and multiple ankyrin repeat domains protein 3 (1740 aa).

The interval 1-75 is intramolecular interaction with the ANK repeats; that stretch reads MDGPGASAVV…KFLDEERLLQ (75 aa). Phosphotyrosine is present on Tyr122. 6 ANK repeats span residues 148 to 181, 182 to 214, 215 to 245, 249 to 278, 282 to 311, and 315 to 345; these read SGECPLSLAAQLDNATDLLKVLRNGGAHLDFRTR, DGLTAVHCATRQRNAGALTTLLDLGASPDYKDS, RGLTPLYHSALGGGDALCCELLLHDHAQLGT, NGWQEIHQACRFGHVQHLEHLLFYGANMGA, SGNTALHICALYNQESCARVLLFRGANKDV, and NSQTAFQVAIIAGNFELAEVIKTHKDSDVVP. The tract at residues 354-466 is disordered; sequence KRRRLAGPSG…PPPRGPKRKL (113 aa). Ser373, Ser375, Ser387, and Ser394 each carry phosphoserine. The segment covering 404–415 has biased composition (basic and acidic residues); that stretch reads LQEEKDRDRDGE. A compositionally biased stretch (pro residues) spans 444 to 460; the sequence is APGPGPASPAPPAPPPR. An SH3 domain is found at 470–529; that stretch reads VPGRKFIAVKAHSPQGEGEIPLHRGEAVKVLSIGEGGFWEGTVKGRTGWFPADCVEEVQM. The residue at position 482 (Ser482) is a Phosphoserine. At Tyr555 the chain carries Phosphotyrosine. In terms of domain architecture, PDZ spans 570–664; the sequence is VAILQKRDHE…RLVMKVVSVT (95 aa). The interval 664-687 is disordered; it reads TRKPEEDSARRRAPPPPKRAPSTT. A required for interaction with ABI1 region spans residues 677-684; the sequence is PPPPKRAP. Ser694, Ser781, Ser790, and Ser801 each carry phosphoserine. Disordered regions lie at residues 759–855, 868–1053, 1115–1199, 1211–1463, and 1476–1518; these read RQGL…RSSF, AGLY…QPSR, AARE…MILS, LIVV…GPAR, and GDPV…EPVG. The span at 812 to 845 shows a compositional bias: pro residues; it reads IPPPPQTAPPPPPAPYYFDSGPPPTFSPPPPPPG. Ser891 and Ser898 each carry phosphoserine. Thr913 is subject to Phosphothreonine. Tyr931 carries the phosphotyrosine modification. Arg966 is subject to Asymmetric dimethylarginine. A compositionally biased stretch (basic and acidic residues) spans 1017–1027; that stretch reads VKERRLEERRR. Polar residues predominate over residues 1123 to 1132; the sequence is SQTPSRSPTP. Thr1131 carries the phosphothreonine modification. Phosphoserine is present on residues Ser1135, Ser1160, Ser1164, and Ser1167. Basic and acidic residues predominate over residues 1175-1195; that stretch reads ARREAEKPTREERKSPEDKKS. Thr1235 carries the phosphothreonine modification. Composition is skewed to pro residues over residues 1252 to 1262 and 1322 to 1334; these read MPSPRAQPPGS and TPPPGPGPLPTTV. Phosphoserine is present on Ser1254. Positions 1335 to 1344 are enriched in low complexity; sequence PSPASGKPSS. A compositionally biased stretch (basic and acidic residues) spans 1361–1371; it reads ADTRSSSDPHL. A compositionally biased stretch (low complexity) spans 1372–1393; the sequence is ETTSTISTVSSMSTLSSESGEL. Positions 1411–1417 match the SH3-binding motif; the sequence is PPVPPKP. The residue at position 1421 (Ser1421) is a Phosphoserine. Residues 1495 to 1515 adopt a coiled-coil conformation; sequence ISELSSRLQQLNKDTRSLGEE. Residues 1496–1506 are compositionally biased toward polar residues; it reads SELSSRLQQLN. Residues Ser1511, Ser1522, Ser1530, and Ser1549 each carry the phosphoserine modification. Disordered stretches follow at residues 1556–1594 and 1637–1673; these read ISAQRSPGGPGGGASYSVRPSGRYPVARRAPSPVKPASL and VRSVSARSRSPSPSPLPSPSPGSGPSAGPRRPFQQKP. A compositionally biased stretch (low complexity) spans 1637 to 1647; it reads VRSVSARSRSP. Residues Ser1644, Ser1646, and Ser1648 each carry the phosphoserine modification. Pro residues predominate over residues 1648-1658; that stretch reads SPSPLPSPSPG. Low complexity predominate over residues 1659-1668; the sequence is SGPSAGPRRP. In terms of domain architecture, SAM spans 1677–1740; sequence WSKFDVGDWL…ERALRQLDGS (64 aa).

It belongs to the SHANK family. In terms of assembly, may homomultimerize via its SAM domain. Interacts with BAIAP2, DBNL and SLC17A7/VGLUT1. Interacts with DLGAP1/GKAP, GRM1/MGLUR1, GRM5/MGLUR5 and LZTS3 C-termini via its PDZ domain. Interacts with ABI1, HOMER1, HOMER2, HOMER3 and CTTN/cortactin SH3 domain. Is part of a complex with DLG4/PSD-95 and DLGAP1/GKAP. Interacts (via PDZ domain) with the GRIA1 subunit of the AMPA receptor (via PDZ-binding motif). Interacts with WASF1 and CYFIP2; the interactions mediate the association of SHANK3 with the WAVE1 complex. Interacts with ARPC2; the interaction probably mediates the association of SHANK3 with the Arp2/3 complex. Interacts (via ANK repeats) with SHARPIN and SPTAN1. Interacts (via PDZ domain) with ARHGAP44 (probably via PDZ-binding motif); the interaction takes place in dendritic spines and promotes GRIA1 exocytosis. Interacts with CAMK2A. Interacts with DIP2A. Interacts with ADGRL3. Widely expressed in brain (at protein level).

It localises to the cytoplasm. It is found in the postsynaptic density. The protein localises to the cell projection. Its subcellular location is the dendritic spine. Functionally, major scaffold postsynaptic density protein which interacts with multiple proteins and complexes to orchestrate the dendritic spine and synapse formation, maturation and maintenance. Interconnects receptors of the postsynaptic membrane including NMDA-type and metabotropic glutamate receptors via complexes with GKAP/PSD-95 and HOMER, respectively, and the actin-based cytoskeleton. Plays a role in the structural and functional organization of the dendritic spine and synaptic junction through the interaction with Arp2/3 and WAVE1 complex as well as the promotion of the F-actin clusters. By way of this control of actin dynamics, participates in the regulation of developing neurons growth cone motility and the NMDA receptor-signaling. Also modulates GRIA1 exocytosis and GRM5/MGLUR5 expression and signaling to control the AMPA and metabotropic glutamate receptor-mediated synaptic transmission and plasticity. May be required at an early stage of synapse formation and be inhibited by IGF1 to promote synapse maturation. The polypeptide is SH3 and multiple ankyrin repeat domains protein 3 (Shank3) (Rattus norvegicus (Rat)).